The chain runs to 118 residues: MVEKCYSCLICGYKGLIQNPLYKGEYQKTFDICPCCGFEFGYSEDHDVRLGFIVTPDHLIEAAFQLYRKQWLESGMVIAHPEDIPEELKNGNCLKFEVLLKQLKKLNLDIENFEISGF.

This is an uncharacterized protein from Bacillus subtilis (strain 168).